The chain runs to 467 residues: GTPase Der (467 aa).

EngA-type G domains lie at 3–167 and 179–352; these read PTLV…PYEE and PVIA…AAAR. GTP contacts are provided by residues 9 to 16, 56 to 60, 119 to 122, 185 to 192, 232 to 236, and 297 to 300; these read GRPNVGKS, DTGGF, NKTE, DTAGL, and NKWD. Residues 353–437 enclose the KH-like domain; the sequence is AHIPTPKLTR…PLRVEFRTGH (85 aa). Positions 434–467 are disordered; it reads RTGHNPYAGKKTPLTEEEARRAHSRRRRNRKKYG. Over residues 455 to 467 the composition is skewed to basic residues; that stretch reads AHSRRRRNRKKYG.

The protein belongs to the TRAFAC class TrmE-Era-EngA-EngB-Septin-like GTPase superfamily. EngA (Der) GTPase family. As to quaternary structure, associates with the 50S ribosomal subunit.

GTPase that plays an essential role in the late steps of ribosome biogenesis. The sequence is that of GTPase Der from Nitrosomonas europaea (strain ATCC 19718 / CIP 103999 / KCTC 2705 / NBRC 14298).